The primary structure comprises 451 residues: UDP-N-acetyl-alpha-D-muramoyl-L-alanyl-L-glutamate epimerase (451 aa).

Belongs to the MurL family.

It carries out the reaction UDP-N-acetyl-alpha-D-muramoyl-L-alanyl-L-glutamate + ATP + H2O = UDP-N-acetyl-alpha-D-muramoyl-L-alanyl-D-glutamate + AMP + diphosphate + H(+). It functions in the pathway cell wall biogenesis; peptidoglycan biosynthesis. In terms of biological role, cell wall formation. Catalyzes epimerization of the terminal L-glutamate in UDP-N-acetyl-alpha-D-muramoyl-L-alanyl-L-glutamate. The sequence is that of UDP-N-acetyl-alpha-D-muramoyl-L-alanyl-L-glutamate epimerase from Xanthomonas oryzae pv. oryzae (strain MAFF 311018).